We begin with the raw amino-acid sequence, 67 residues long: Beta-defensin 14 (67 aa).

The N-terminal stretch at 1 to 22 (MRLHYLLFVFLILFLVPAPGDA) is a signal peptide. 3 disulfides stabilise this stretch: Cys33/Cys62, Cys40/Cys55, and Cys45/Cys63.

It belongs to the beta-defensin family.

Its subcellular location is the secreted. Functionally, has antibacterial activity. This chain is Beta-defensin 14 (Defb14), found in Mus musculus (Mouse).